The following is a 424-amino-acid chain: D-inositol 3-phosphate glycosyltransferase (424 aa).

1D-myo-inositol 3-phosphate contacts are provided by residues His-9, Asp-20–Asn-25, Lys-78, Tyr-110, Thr-134, and Arg-154. Gly-23 lines the UDP-N-acetyl-alpha-D-glucosamine pocket. UDP-N-acetyl-alpha-D-glucosamine contacts are provided by Arg-231, Lys-236, and Arg-295. Tyr-304, Gln-305, and Ala-307 together coordinate Mg(2+). Glu-317 and Glu-325 together coordinate UDP-N-acetyl-alpha-D-glucosamine. Thr-331 provides a ligand contact to Mg(2+).

The protein belongs to the glycosyltransferase group 1 family. MshA subfamily. In terms of assembly, homodimer.

The enzyme catalyses 1D-myo-inositol 3-phosphate + UDP-N-acetyl-alpha-D-glucosamine = 1D-myo-inositol 2-acetamido-2-deoxy-alpha-D-glucopyranoside 3-phosphate + UDP + H(+). Functionally, catalyzes the transfer of a N-acetyl-glucosamine moiety to 1D-myo-inositol 3-phosphate to produce 1D-myo-inositol 2-acetamido-2-deoxy-glucopyranoside 3-phosphate in the mycothiol biosynthesis pathway. This Corynebacterium urealyticum (strain ATCC 43042 / DSM 7109) protein is D-inositol 3-phosphate glycosyltransferase.